We begin with the raw amino-acid sequence, 316 residues long: 4-diphosphocytidyl-2-C-methyl-D-erythritol kinase (316 aa).

Lysine 23 is a catalytic residue. Residue 108–118 participates in ATP binding; sequence PVAGGMAGGSA. Aspartate 150 is an active-site residue.

Belongs to the GHMP kinase family. IspE subfamily.

The enzyme catalyses 4-CDP-2-C-methyl-D-erythritol + ATP = 4-CDP-2-C-methyl-D-erythritol 2-phosphate + ADP + H(+). It functions in the pathway isoprenoid biosynthesis; isopentenyl diphosphate biosynthesis via DXP pathway; isopentenyl diphosphate from 1-deoxy-D-xylulose 5-phosphate: step 3/6. In terms of biological role, catalyzes the phosphorylation of the position 2 hydroxy group of 4-diphosphocytidyl-2C-methyl-D-erythritol. The sequence is that of 4-diphosphocytidyl-2-C-methyl-D-erythritol kinase from Mycolicibacterium paratuberculosis (strain ATCC BAA-968 / K-10) (Mycobacterium paratuberculosis).